A 549-amino-acid polypeptide reads, in one-letter code: Arginine--tRNA ligase (549 aa).

The short motif at 132 to 142 (ANPTGPLHLAH) is the 'HIGH' region element.

This sequence belongs to the class-I aminoacyl-tRNA synthetase family. Monomer.

The protein resides in the cytoplasm. It catalyses the reaction tRNA(Arg) + L-arginine + ATP = L-arginyl-tRNA(Arg) + AMP + diphosphate. The protein is Arginine--tRNA ligase of Renibacterium salmoninarum (strain ATCC 33209 / DSM 20767 / JCM 11484 / NBRC 15589 / NCIMB 2235).